The primary structure comprises 88 residues: MSETNERNRRHVYQGRVVSDKMDKTIVVVVDTYKNHPVYSKRIRYSKKYYAQDENNEAKVGDTVRIMETRPLSRKKRFRLVKIVKKSV.

It belongs to the universal ribosomal protein uS17 family. In terms of assembly, part of the 30S ribosomal subunit.

In terms of biological role, one of the primary rRNA binding proteins, it binds specifically to the 5'-end of 16S ribosomal RNA. In Lactobacillus helveticus (strain DPC 4571), this protein is Small ribosomal subunit protein uS17.